We begin with the raw amino-acid sequence, 158 residues long: Cyclic pyranopterin monophosphate synthase (158 aa).

Substrate is bound by residues 75–77 (LCH) and 113–114 (ME). The active site involves Asp128.

Belongs to the MoaC family. Homohexamer; trimer of dimers.

The enzyme catalyses (8S)-3',8-cyclo-7,8-dihydroguanosine 5'-triphosphate = cyclic pyranopterin phosphate + diphosphate. The protein operates within cofactor biosynthesis; molybdopterin biosynthesis. In terms of biological role, catalyzes the conversion of (8S)-3',8-cyclo-7,8-dihydroguanosine 5'-triphosphate to cyclic pyranopterin monophosphate (cPMP). This chain is Cyclic pyranopterin monophosphate synthase, found in Paraburkholderia xenovorans (strain LB400).